We begin with the raw amino-acid sequence, 65 residues long: uncharacterized protein (65 aa).

A helical transmembrane segment spans residues 37-57; sequence ILAIMTSVLPVLLIYIIWIFI.

It localises to the cell membrane. This is an uncharacterized protein from Bacillus subtilis (strain 168).